Reading from the N-terminus, the 325-residue chain is MIARIWSGESPLWRLLLPLSWLYGLVSGAIRLSYKLGFKRAWRAPVPVVVVGNLTAGGNGKTPVVIWLVEKLQQRGVRVGVVSRGYGGKAAAYPLLLTPETTTAEAGDEPVLIYQRTGAPVAVAPERAAAVKAILAAHNVQIIITDDGLQHYRLARDIEIVVIDGVRRFGNGWWLPAGPMRERASRLKTVDAAIVNGGVARVGEIPMQLAPGLAVNLRTGARCDVAQLSNIVAMAGIGHPPRFFATLEACGAHPQKCVPLADHQTLAPADVQALVGEGQTLVMTEKDAVKCRAFAEDNWWFLPVDARLSGEQPDKLLEHITSLVR.

55 to 62 (TAGGNGKT) is an ATP binding site.

The protein belongs to the LpxK family.

It catalyses the reaction a lipid A disaccharide + ATP = a lipid IVA + ADP + H(+). The protein operates within glycolipid biosynthesis; lipid IV(A) biosynthesis; lipid IV(A) from (3R)-3-hydroxytetradecanoyl-[acyl-carrier-protein] and UDP-N-acetyl-alpha-D-glucosamine: step 6/6. Transfers the gamma-phosphate of ATP to the 4'-position of a tetraacyldisaccharide 1-phosphate intermediate (termed DS-1-P) to form tetraacyldisaccharide 1,4'-bis-phosphate (lipid IVA). This is Tetraacyldisaccharide 4'-kinase from Salmonella choleraesuis (strain SC-B67).